The following is a 359-amino-acid chain: Peptide chain release factor 1 (359 aa).

Gln238 carries the post-translational modification N5-methylglutamine.

This sequence belongs to the prokaryotic/mitochondrial release factor family. Post-translationally, methylated by PrmC. Methylation increases the termination efficiency of RF1.

The protein localises to the cytoplasm. Peptide chain release factor 1 directs the termination of translation in response to the peptide chain termination codons UAG and UAA. This is Peptide chain release factor 1 from Rhodococcus jostii (strain RHA1).